A 372-amino-acid polypeptide reads, in one-letter code: Queuine tRNA-ribosyltransferase (372 aa).

Aspartate 92 functions as the Proton acceptor in the catalytic mechanism. Residues 92–96 (DSGGY), aspartate 146, glutamine 188, and glycine 215 contribute to the substrate site. The RNA binding stretch occupies residues 246–252 (GIGSLKE). Residue aspartate 265 is the Nucleophile of the active site. An RNA binding; important for wobble base 34 recognition region spans residues 270–274 (TRLGR). Zn(2+)-binding residues include cysteine 303, cysteine 305, cysteine 308, and histidine 334.

Belongs to the queuine tRNA-ribosyltransferase family. As to quaternary structure, homodimer. Within each dimer, one monomer is responsible for RNA recognition and catalysis, while the other monomer binds to the replacement base PreQ1. Zn(2+) is required as a cofactor.

The catalysed reaction is 7-aminomethyl-7-carbaguanine + guanosine(34) in tRNA = 7-aminomethyl-7-carbaguanosine(34) in tRNA + guanine. It functions in the pathway tRNA modification; tRNA-queuosine biosynthesis. Its function is as follows. Catalyzes the base-exchange of a guanine (G) residue with the queuine precursor 7-aminomethyl-7-deazaguanine (PreQ1) at position 34 (anticodon wobble position) in tRNAs with GU(N) anticodons (tRNA-Asp, -Asn, -His and -Tyr). Catalysis occurs through a double-displacement mechanism. The nucleophile active site attacks the C1' of nucleotide 34 to detach the guanine base from the RNA, forming a covalent enzyme-RNA intermediate. The proton acceptor active site deprotonates the incoming PreQ1, allowing a nucleophilic attack on the C1' of the ribose to form the product. After dissociation, two additional enzymatic reactions on the tRNA convert PreQ1 to queuine (Q), resulting in the hypermodified nucleoside queuosine (7-(((4,5-cis-dihydroxy-2-cyclopenten-1-yl)amino)methyl)-7-deazaguanosine). The chain is Queuine tRNA-ribosyltransferase from Prochlorococcus marinus (strain MIT 9515).